Here is a 340-residue protein sequence, read N- to C-terminus: MTKITVVGAGSWGTALAMVLADNGHDVRIWGNRSELMDEMNTKHENSRYLPGITLPSTIVAYSSLEEALVDVNTVLLVVPTKAYRDVLQEMKEIVTEPITWIHASKGIEPGTSKRISEVIEEEIPENLIKDVVVLSGPSHAEEVGLRQATTVTSAAKRMEAAEEVQDLFMNSYFRVYTNPDIVGVELGGALKNIIALAAGITDGLGLGDNAKAALMTRGLTEIARLGRKMGGNPLTFAGLTGMGDLIVTCTSVHSRNWRAGNMLGKGHSLEEVLESMGMVVEGVRTTKAAHELAEKMEVEMPITAALYDVLFNGNNVKDAVGSLMGRVRKHEVEAIPDLL.

Positions 11, 12, 33, and 106 each coordinate NADPH. Residues Lys106, Gly137, and Ser139 each contribute to the sn-glycerol 3-phosphate site. Ala141 provides a ligand contact to NADPH. Sn-glycerol 3-phosphate is bound by residues Lys192, Asp245, Ser255, Arg256, and Asn257. Lys192 acts as the Proton acceptor in catalysis. Residue Arg256 participates in NADPH binding. Val280 and Glu282 together coordinate NADPH.

This sequence belongs to the NAD-dependent glycerol-3-phosphate dehydrogenase family.

The protein resides in the cytoplasm. The catalysed reaction is sn-glycerol 3-phosphate + NAD(+) = dihydroxyacetone phosphate + NADH + H(+). It carries out the reaction sn-glycerol 3-phosphate + NADP(+) = dihydroxyacetone phosphate + NADPH + H(+). It functions in the pathway membrane lipid metabolism; glycerophospholipid metabolism. Its function is as follows. Catalyzes the reduction of the glycolytic intermediate dihydroxyacetone phosphate (DHAP) to sn-glycerol 3-phosphate (G3P), the key precursor for phospholipid synthesis. The chain is Glycerol-3-phosphate dehydrogenase [NAD(P)+] from Bacillus cereus (strain G9842).